A 141-amino-acid polypeptide reads, in one-letter code: Putative pre-16S rRNA nuclease (141 aa).

It belongs to the YqgF nuclease family.

It localises to the cytoplasm. Functionally, could be a nuclease involved in processing of the 5'-end of pre-16S rRNA. This Coxiella burnetii (strain RSA 331 / Henzerling II) protein is Putative pre-16S rRNA nuclease.